A 350-amino-acid chain; its full sequence is MAQDSTIKPFLEVLSGRRQAVPPIWMMRQAGRYLPEYRELRAKAGGFLDLCFTPEFAAEVTLQPIRRFAFDAAIIFSDILVIPYALGRSVRFEVGEGPRLDPLDTPDMAATLSREADMTKLEPVFEALRRVRRELDSKTALIGFCGAPWTVATYMVAGRGTPDQAPARMMAYRHPEAFAKIIDVLVENSVRYLLGQLKAGADVLQIFDTWAGVLPPREFARWSIEPTRRIVEGVRKIVPDAKIIGFPRGAGALLPSYIEATGVDAVSIDWAAEPSLVREKVQSRVAVQGNLDPLALIAGGAALDRAVDDVLANFAGGRLIFNLGHGIQPETPIPHVEQMIRRVRGSGLRE.

Substrate contacts are provided by residues 28-32 (RQAGR), D78, Y154, T209, and H325.

This sequence belongs to the uroporphyrinogen decarboxylase family. As to quaternary structure, homodimer.

Its subcellular location is the cytoplasm. It catalyses the reaction uroporphyrinogen III + 4 H(+) = coproporphyrinogen III + 4 CO2. It participates in porphyrin-containing compound metabolism; protoporphyrin-IX biosynthesis; coproporphyrinogen-III from 5-aminolevulinate: step 4/4. Catalyzes the decarboxylation of four acetate groups of uroporphyrinogen-III to yield coproporphyrinogen-III. The protein is Uroporphyrinogen decarboxylase of Nitrobacter hamburgensis (strain DSM 10229 / NCIMB 13809 / X14).